A 604-amino-acid polypeptide reads, in one-letter code: Proline--tRNA ligase (604 aa).

Belongs to the class-II aminoacyl-tRNA synthetase family. ProS type 1 subfamily. As to quaternary structure, homodimer.

It is found in the cytoplasm. The catalysed reaction is tRNA(Pro) + L-proline + ATP = L-prolyl-tRNA(Pro) + AMP + diphosphate. Catalyzes the attachment of proline to tRNA(Pro) in a two-step reaction: proline is first activated by ATP to form Pro-AMP and then transferred to the acceptor end of tRNA(Pro). As ProRS can inadvertently accommodate and process non-cognate amino acids such as alanine and cysteine, to avoid such errors it has two additional distinct editing activities against alanine. One activity is designated as 'pretransfer' editing and involves the tRNA(Pro)-independent hydrolysis of activated Ala-AMP. The other activity is designated 'posttransfer' editing and involves deacylation of mischarged Ala-tRNA(Pro). The misacylated Cys-tRNA(Pro) is not edited by ProRS. The chain is Proline--tRNA ligase from Trichormus variabilis (strain ATCC 29413 / PCC 7937) (Anabaena variabilis).